The sequence spans 595 residues: MALKKMPPKKPYHQKASKTKACYNCHRKRLRCDKSLPACLKCSINGEECLGYGIVLRWAACNSPTSTITTRTTNKTNFNGTNTTTPRTVKSSTPTQAPTPSDSPRQLDTDVTSSSAPSHTCSRSTTTSTTTTRISSPTLEETIDSFTVETPIDNNVDPLPRAPDDNPDPSSQIIKRPVNLIKIPLTDPLLNGLSTKARWYMHHFATIVCRDLVSIDQKERNPFRAIIPLVRKFDYLQSVVLATAAMHLSTIHKYQGRSLPSESALVDALMLKSRALHLLRAAINDNTLTDKAMILSAIVFLVNLDLIDSGRGGWKAHVGAARRLISSLYLTKAHLDGAIAPLVNAIAADCLTYRIYGSTISGNTSSWSDNTIDDGVVLPYILQNAEAYSYHCAPPAILQIILSASQLCSGSSTTLETDGGAGRIVTAAALLHKARNFDVQTWVYNIKGLPPDDDLEARVSVASAHRAAACLFVLLSVPETGLLEIPLLEPKDLVQEILGHLSCIPDNHVHLKGTVWPTFVVGAETDDLSERAWCLERLVAVWTKNPWTYPWGYVHTAMEMLQEIWRLKDLAAQQGDDGINWLQRLKATENSCLIV.

Residues 22–49 (CYNCHRKRLRCDKSLPACLKCSINGEEC) constitute a DNA-binding region (zn(2)-C6 fungal-type). The span at 69 to 88 (TTRTTNKTNFNGTNTTTPRT) shows a compositional bias: low complexity. The tract at residues 69 to 172 (TTRTTNKTNF…PDDNPDPSSQ (104 aa)) is disordered. Residues 89–117 (VKSSTPTQAPTPSDSPRQLDTDVTSSSAP) are compositionally biased toward polar residues. Low complexity predominate over residues 118–138 (SHTCSRSTTTSTTTTRISSPT).

The protein localises to the nucleus. Its function is as follows. Probable transcriptional regulator. The polypeptide is Acriflavine sensitivity control protein acr-2 (acr-2) (Neurospora crassa (strain ATCC 24698 / 74-OR23-1A / CBS 708.71 / DSM 1257 / FGSC 987)).